Here is a 554-residue protein sequence, read N- to C-terminus: CTP synthase (554 aa).

The segment at 1 to 279 is amidoligase domain; it reads MTSSRKVRPT…DTFIIRRLGL (279 aa). S21 serves as a coordination point for CTP. S21 is a UTP binding site. Residues 22-27 and D79 each bind ATP; that span reads SLGKGL. Positions 79 and 153 each coordinate Mg(2+). Residues 160–162, 200–205, and K236 each bind CTP; these read DIE and KTKPTQ. Residues 200–205 and K236 contribute to the UTP site; that span reads KTKPTQ. The region spanning 304 to 553 is the Glutamine amidotransferase type-1 domain; the sequence is TVGIVGKYID…VKTALELRVH (250 aa). Residue G367 coordinates L-glutamine. C394 acts as the Nucleophile; for glutamine hydrolysis in catalysis. Residues 395–398, E417, and R478 contribute to the L-glutamine site; that span reads LGLQ. Catalysis depends on residues H526 and E528.

Belongs to the CTP synthase family. Homotetramer.

The enzyme catalyses UTP + L-glutamine + ATP + H2O = CTP + L-glutamate + ADP + phosphate + 2 H(+). It catalyses the reaction L-glutamine + H2O = L-glutamate + NH4(+). The catalysed reaction is UTP + NH4(+) + ATP = CTP + ADP + phosphate + 2 H(+). The protein operates within pyrimidine metabolism; CTP biosynthesis via de novo pathway; CTP from UDP: step 2/2. Its activity is regulated as follows. Allosterically activated by GTP, when glutamine is the substrate; GTP has no effect on the reaction when ammonia is the substrate. The allosteric effector GTP functions by stabilizing the protein conformation that binds the tetrahedral intermediate(s) formed during glutamine hydrolysis. Inhibited by the product CTP, via allosteric rather than competitive inhibition. Catalyzes the ATP-dependent amination of UTP to CTP with either L-glutamine or ammonia as the source of nitrogen. Regulates intracellular CTP levels through interactions with the four ribonucleotide triphosphates. In Corynebacterium glutamicum (strain R), this protein is CTP synthase.